A 167-amino-acid polypeptide reads, in one-letter code: uncharacterized protein (167 aa).

The helical transmembrane segment at 39 to 59 (LSLFSLSPLFLLLSISSLIFS) threads the bilayer. The stretch at 92-122 (LGTQIEMITQAMTTLESRVTDLQQESNDHRT) forms a coiled coil. The interval 134–167 (RDLGDENRPKPTTNKMIATGEQHKGEVSTSLFHD) is disordered. Residues 154–167 (EQHKGEVSTSLFHD) show a composition bias toward basic and acidic residues.

The protein localises to the mitochondrion membrane. This is an uncharacterized protein from Arabidopsis thaliana (Mouse-ear cress).